The sequence spans 478 residues: Deoxyribodipyrimidine photo-lyase (478 aa).

Positions 2-136 constitute a Photolyase/cryptochrome alpha/beta domain; the sequence is NVNLMWFRND…IINCFHDSVL (135 aa). Glu110 contacts (6R)-5,10-methylene-5,6,7,8-tetrahydrofolate. Residues Tyr227 and 239–243 each bind FAD; that span reads TSMLS. Interaction with DNA stretches follow at residues 279–286 and 346–347; these read ELLWREFY and NR. 377 to 379 contributes to the FAD binding site; the sequence is DGD. Gln409 contacts DNA.

It belongs to the DNA photolyase class-1 family. As to quaternary structure, monomer. It depends on FAD as a cofactor. Requires (6R)-5,10-methylene-5,6,7,8-tetrahydrofolate as cofactor.

The catalysed reaction is cyclobutadipyrimidine (in DNA) = 2 pyrimidine residues (in DNA).. Involved in repair of UV radiation-induced DNA damage. Catalyzes the light-dependent monomerization (300-600 nm) of cyclobutyl pyrimidine dimers (in cis-syn configuration), which are formed between adjacent bases on the same DNA strand upon exposure to ultraviolet radiation. This Buchnera aphidicola subsp. Baizongia pistaciae (strain Bp) protein is Deoxyribodipyrimidine photo-lyase (phrB).